Here is a 212-residue protein sequence, read N- to C-terminus: Protein FAM177A1 (212 aa).

Residue Met1 is modified to N-acetylmethionine. The segment covering 1-11 (MEGEPASREEG) has biased composition (basic and acidic residues). The tract at residues 1–33 (MEGEPASREEGEAVNASGAAAASAFRESAQQMS) is disordered. Residues 13–29 (AVNASGAAAASAFRESA) show a composition bias toward low complexity. Residue Ser69 is modified to Phosphoserine. At Thr70 the chain carries Phosphothreonine. The stretch at 135–172 (IDEYYRMKKEEEEEEEENRMSEEAERQYQQNKLQADSV) forms a coiled coil. Positions 146-179 (EEEEEENRMSEEAERQYQQNKLQADSVVQSDQPE) are disordered. Over residues 161–179 (QYQQNKLQADSVVQSDQPE) the composition is skewed to polar residues.

The protein belongs to the FAM177 family.

This chain is Protein FAM177A1 (FAM177A1), found in Bos taurus (Bovine).